The sequence spans 517 residues: MSPEAYVLFFNSFNLVTFEAFASVSLIIATVAFLLSPGGLAWAWTGSSKSRVSIPGPSGSLSVFSGSNPHRVLAALAKRFKASPLMAFSVGFSRFVISSEPETAKEILSSSAFADRPVKESAYELLFHRAMGFAPYGEYWRNLRRISSTHLFSPRRIASFEGVRVGIGMKMVKKIKSLVTSDACGEVEVKKIVHFGSLNNVMTTVFGESYDFDEVNGKGCFLERLVSEGYELLGIFNWSDHFWFLRWFDFQGVRKRCRALVSEVNTFVGGIIEKHKMKKGNNLNGEENDFVDVLLGLQKDEKLSDSDMIAVLWEMIFRGTDTVAILVEWVLARMVLHQDIQDKLYREIASATSNNIRSLSDSDIPKLPYLQAIVKETLRLHPPGPLLSWARLAIHDVHVGPNLVPAGTIAMVNMWSITHNAKIWTDPEAFMPERFISEDVSIMGSDLRLAPFGSGRRVCPGKAMGLATVHLWIGQLIQNFEWVKGSCDVELAEVLKLSMEMKNPLKCKAVPRNVGFA.

A helical membrane pass occupies residues 20 to 40 (AFASVSLIIATVAFLLSPGGL). Heme is bound at residue Cys459.

Belongs to the cytochrome P450 family. Requires heme as cofactor. In terms of tissue distribution, expressed in the periphery of the shoot apical meristem and inflorescence meristem, on the adaxial sides of developing floral organs and in developing ovules in the region where the integuments emerge.

The protein localises to the membrane. In terms of biological role, plays a role in regulating directional growth at the meristem/organ boundary. Is required for the promotion of leaf and floral organ growth and for the prolongation of the plastochron. Promotes organ growth in a non-cell-autonomous manner and may generate a mobile growth signal distinct from the classical phytohormones that prevents premature arrest of proliferation, until the correct primordium size has been reached. Functions probably in association with CYP78A7 in regulating relative growth of the shoot apical meristem and plant organs. Is required locally in developing ovules to stimulates cell proliferation and promote seed growth. The polypeptide is Cytochrome P450 78A5 (CYP78A5) (Arabidopsis thaliana (Mouse-ear cress)).